A 49-amino-acid chain; its full sequence is Large ribosomal subunit protein bL33 (49 aa).

Belongs to the bacterial ribosomal protein bL33 family.

The chain is Large ribosomal subunit protein bL33 from Clostridium botulinum (strain Alaska E43 / Type E3).